A 336-amino-acid polypeptide reads, in one-letter code: Phospho-N-acetylmuramoyl-pentapeptide-transferase (336 aa).

The next 10 helical transmembrane spans lie at 3 to 23 (LTLIAAIISFMVSAFTMPYFI), 53 to 73 (GGTVFLLVATAVSLLVSLFSI), 78 to 98 (SLALISGILSIVVIYGIIGFL), 118 to 138 (LALQLAGGLMFYFLHVSPSGI), 143 to 163 (VFGYQLSLGIFYLFFVLFWVV), 174 to 194 (GIDGLASISVVISLVTYGVIA), 200 to 220 (FDVLLLIGTMIGALLGFFCFN), 226 to 246 (VFMGDVGSLALGAMLAAISIA), 251 to 271 (WTLLIIGIVYVLETSSVMLQV), and 316 to 336 (AFLWGVGSLASLLVLAILYVF).

It belongs to the glycosyltransferase 4 family. MraY subfamily. Mg(2+) is required as a cofactor.

It is found in the cell membrane. It carries out the reaction UDP-N-acetyl-alpha-D-muramoyl-L-alanyl-gamma-D-glutamyl-L-lysyl-D-alanyl-D-alanine + di-trans,octa-cis-undecaprenyl phosphate = Mur2Ac(oyl-L-Ala-gamma-D-Glu-L-Lys-D-Ala-D-Ala)-di-trans,octa-cis-undecaprenyl diphosphate + UMP. It functions in the pathway cell wall biogenesis; peptidoglycan biosynthesis. Its function is as follows. Catalyzes the initial step of the lipid cycle reactions in the biosynthesis of the cell wall peptidoglycan: transfers peptidoglycan precursor phospho-MurNAc-pentapeptide from UDP-MurNAc-pentapeptide onto the lipid carrier undecaprenyl phosphate, yielding undecaprenyl-pyrophosphoryl-MurNAc-pentapeptide, known as lipid I. The sequence is that of Phospho-N-acetylmuramoyl-pentapeptide-transferase from Streptococcus pyogenes serotype M4 (strain MGAS10750).